The chain runs to 397 residues: uncharacterized protein (397 aa).

The next 4 helical transmembrane spans lie at 62–79, 92–109, 135–154, and 167–189; these read VLLF…LIAI, WYGL…LVVT, VVFL…STLS, and AFLK…FPGI.

It is found in the cell membrane. This is an uncharacterized protein from Archaeoglobus fulgidus (strain ATCC 49558 / DSM 4304 / JCM 9628 / NBRC 100126 / VC-16).